A 1409-amino-acid polypeptide reads, in one-letter code: Tensin-2 (1409 aa).

Residues M1–R35 are disordered. Residues R9–S20 are compositionally biased toward basic and acidic residues. Residues P31–C79 form a Phorbol-ester/DAG-type zinc finger. T91 is modified (phosphothreonine). A phosphoserine mark is found at S118 and S120. Residues D122–S294 enclose the Phosphatase tensin-type domain. C231 (phosphocysteine intermediate) is an active-site residue. Residues S299–S425 form the C2 tensin-type domain. S455 is subject to Phosphoserine. A Phosphotyrosine modification is found at Y456. The segment at H462–A536 is disordered. At S466 the chain carries Phosphoserine. T474 is subject to Phosphothreonine. S481 bears the Phosphoserine mark. The residue at position 483 (Y483) is a Phosphotyrosine. Residues R491–M506 show a composition bias toward pro residues. R555 is modified (omega-N-methylarginine). Disordered stretches follow at residues A562–P582, P812–A1098, and L1111–V1130. S820, S825, S830, S832, S835, and S845 each carry phosphoserine. Composition is skewed to polar residues over residues S900–V918 and R930–L940. T910 is subject to Phosphothreonine. 3 positions are modified to phosphoserine: S931, S941, and S972. The segment covering P968–S982 has biased composition (pro residues). T977 is modified (phosphothreonine). Phosphoserine is present on residues S991 and S1003. The span at P1046 to A1056 shows a compositional bias: pro residues. The region spanning W1140 to S1247 is the SH2 domain. Phosphothreonine is present on T1182. S1247 is modified (phosphoserine). The PTB domain maps to A1275 to R1408.

The protein belongs to the PTEN phosphatase protein family. In terms of assembly, interacts with AXL. Interacts with SYK; leading to its phosphorylation. Interacts with SQSTM1 (via PB1 domain); the interaction leads to sequestration of TNS2 in cytoplasmic aggregates with SQSTM1 and promotes TNS2 ubiquitination and proteasomal degradation. Post-translationally, ubiquitinated following sequestration in cytoplasmic aggregates with SQSTM1, leading to proteasomal degradation. In terms of tissue distribution, detected in heart, kidney, brain, thymus, spleen, liver, placenta, lung, skeletal muscle and small intestine.

It localises to the cell junction. Its subcellular location is the focal adhesion. The protein localises to the cell membrane. It is found in the cytoplasm. The enzyme catalyses O-phospho-L-tyrosyl-[protein] + H2O = L-tyrosyl-[protein] + phosphate. Tyrosine-protein phosphatase which regulates cell motility, proliferation and muscle-response to insulin. Phosphatase activity is mediated by binding to phosphatidylinositol-3,4,5-triphosphate (PtdIns(3,4,5)P3) via the SH2 domain. In muscles and under catabolic conditions, dephosphorylates IRS1 leading to its degradation and muscle atrophy. Negatively regulates PI3K-AKT pathway activation. Dephosphorylates nephrin NPHS1 in podocytes which regulates activity of the mTORC1 complex. Under normal glucose conditions, NPHS1 outcompetes IRS1 for binding to phosphatidylinositol 3-kinase (PI3K) which balances mTORC1 activity but high glucose conditions lead to up-regulation of TNS2, increased NPHS1 dephosphorylation and activation of mTORC1, contributing to podocyte hypertrophy and proteinuria. Required for correct podocyte morphology, podocyte-glomerular basement membrane interaction and integrity of the glomerular filtration barrier. Enhances RHOA activation in the presence of DLC1. Plays a role in promoting DLC1-dependent remodeling of the extracellular matrix. The protein is Tensin-2 (TNS2) of Homo sapiens (Human).